A 235-amino-acid chain; its full sequence is Small ribosomal subunit protein eS4 (235 aa).

Residues 37–100 (LPLGIIIRDI…NEAYRMLQDE (64 aa)) enclose the S4 RNA-binding domain.

This sequence belongs to the eukaryotic ribosomal protein eS4 family.

The chain is Small ribosomal subunit protein eS4 from Methanosarcina acetivorans (strain ATCC 35395 / DSM 2834 / JCM 12185 / C2A).